Here is a 552-residue protein sequence, read N- to C-terminus: Hyaluronan synthase 2 (552 aa).

Residues 1-11 lie on the Cytoplasmic side of the membrane; sequence MHCERFLCILR. Residues 12–32 traverse the membrane as a helical segment; the sequence is IIGTTLFGVSLLLGITAAYIV. The Extracellular portion of the chain corresponds to 33-45; sequence GYQFIQTDNYYFS. Residues 46–66 form a helical membrane-spanning segment; it reads FGLYGAFLASHLIIQSLFAFL. Residues 67 to 374 lie on the Cytoplasmic side of the membrane; the sequence is EHRKMKKSLE…NAMWFHKHHL (308 aa). A Phosphothreonine modification is found at Thr-110. Residue Lys-190 forms a Glycyl lysine isopeptide (Lys-Gly) (interchain with G-Cter in ubiquitin) linkage. An O-linked (GlcNAc) serine glycan is attached at Ser-221. Residue Thr-328 is modified to Phosphothreonine. The chain crosses the membrane as a helical span at residues 375–395; the sequence is WMTYEAVITGFFPFFLIATVI. Residues 396-402 lie on the Extracellular side of the membrane; it reads QLFYRGK. A helical membrane pass occupies residues 403-423; sequence IWNILLFLLTVQLVGLIKSSF. Topologically, residues 424–429 are cytoplasmic; it reads ASCLRG. Residues 430–450 traverse the membrane as a helical segment; sequence NIVMVFMSLYSVLYMSSLLPA. Residues 451-475 lie on the Extracellular side of the membrane; sequence KMFAIATINKAGWGTSGRKTIVVNF. The chain crosses the membrane as a helical span at residues 476–496; it reads IGLIPVSVWFTILLGGVIFTI. Residues 497–510 lie on the Cytoplasmic side of the membrane; it reads YKESKKPFSESKQT. The helical transmembrane segment at 511-531 threads the bilayer; the sequence is VLIVGTLLYACYWVMLLTLYV. The Extracellular segment spans residues 532-552; the sequence is VLINKCGRRKKGQQYDMVLDV.

Belongs to the NodC/HAS family. As to quaternary structure, homodimer; dimerization promotes enzymatic activity. Forms heterodimer with HAS3. Forms heterodimer with HAS1. Mg(2+) serves as cofactor. In terms of processing, phosphorylation at Thr-328 is essential for hyaluronan synthase activity. Post-translationally, O-GlcNAcylation at Ser-221 increases the stability of HAS2 and plasma membrane localization. Ubiquitination at Lys-190; this ubiquitination is essential for hyaluronan synthase activity and homo- or hetero-oligomerization. Can also be poly-ubiquitinated. Deubiquitinated by USP17L22/USP17 and USP4. USP17L22/USP17 efficiently removes 'Lys-63'- and 'Lys-48'-linked polyubiquitin chains, whereas USP4 preferentially removes monoubiquitination and, partially, both 'Lys-63'- and 'Lys-48'-linked polyubiquitin chain. As to expression, overexpressed in skin fibroblasts.

Its subcellular location is the cell membrane. It localises to the endoplasmic reticulum membrane. It is found in the vesicle. The protein resides in the golgi apparatus membrane. The protein localises to the lysosome. It carries out the reaction [hyaluronan](n) + UDP-N-acetyl-alpha-D-glucosamine = N-acetyl-beta-D-glucosaminyl-(1-&gt;4)-[hyaluronan](n) + UDP + H(+). It catalyses the reaction N-acetyl-beta-D-glucosaminyl-(1-&gt;4)-[hyaluronan](n) + UDP-alpha-D-glucuronate = [hyaluronan](n+1) + UDP + H(+). The protein operates within glycan biosynthesis; hyaluronan biosynthesis. Functionally, catalyzes the addition of GlcNAc or GlcUA monosaccharides to the nascent hyaluronan polymer. Therefore, it is essential to hyaluronan synthesis a major component of most extracellular matrices that has a structural role in tissues architectures and regulates cell adhesion, migration and differentiation. This is one of three isoenzymes responsible for cellular hyaluronan synthesis and it is particularly responsible for the synthesis of high molecular mass hyaluronan. The chain is Hyaluronan synthase 2 (Has2) from Heterocephalus glaber (Naked mole rat).